Reading from the N-terminus, the 421-residue chain is Methionine aminopeptidase 2 (421 aa).

The tract at residues 1–53 is disordered; it reads MTDAEIENSPASDLKELNLENEGVEQQDQAKADESDPVESKKKKNKKKKKKKS. The span at 28–40 shows a compositional bias: basic and acidic residues; sequence DQAKADESDPVES. Phosphoserine is present on serine 35. Basic residues predominate over residues 41 to 53; it reads KKKKNKKKKKKKS. A substrate-binding site is contributed by histidine 174. Residues aspartate 194, aspartate 205, and histidine 274 each coordinate a divalent metal cation. Histidine 282 contacts substrate. Residues glutamate 307 and glutamate 402 each coordinate a divalent metal cation.

It belongs to the peptidase M24A family. Methionine aminopeptidase eukaryotic type 2 subfamily. The cofactor is Co(2+). It depends on Zn(2+) as a cofactor. Mn(2+) is required as a cofactor. Fe(2+) serves as cofactor.

The protein resides in the cytoplasm. The enzyme catalyses Release of N-terminal amino acids, preferentially methionine, from peptides and arylamides.. Cotranslationally removes the N-terminal methionine from nascent proteins. The N-terminal methionine is often cleaved when the second residue in the primary sequence is small and uncharged (Met-Ala-, Cys, Gly, Pro, Ser, Thr, or Val). The sequence is that of Methionine aminopeptidase 2 from Saccharomyces cerevisiae (strain RM11-1a) (Baker's yeast).